The primary structure comprises 281 residues: Putative integrase/recombinase y4rD (281 aa).

The region spanning 5–98 (LLLAPLLESY…AIRSFFHHVA (94 aa)) is the Core-binding (CB) domain. In terms of domain architecture, Tyr recombinase spans 122–281 (EVTHHLTKAE…TMSGTENASV (160 aa)). Catalysis depends on residues arginine 162, lysine 188, histidine 262, and arginine 265.

It belongs to the 'phage' integrase family.

Its function is as follows. Seems to be non-functional. This Sinorhizobium fredii (strain NBRC 101917 / NGR234) protein is Putative integrase/recombinase y4rD.